The chain runs to 170 residues: Protein-export protein SecB (170 aa).

The protein belongs to the SecB family. In terms of assembly, homotetramer, a dimer of dimers. One homotetramer interacts with 1 SecA dimer.

It localises to the cytoplasm. In terms of biological role, one of the proteins required for the normal export of preproteins out of the cell cytoplasm. It is a molecular chaperone that binds to a subset of precursor proteins, maintaining them in a translocation-competent state. It also specifically binds to its receptor SecA. This Xanthomonas axonopodis pv. citri (strain 306) protein is Protein-export protein SecB.